A 443-amino-acid polypeptide reads, in one-letter code: tRNA modification GTPase MnmE (443 aa).

Arg23, Glu80, and Lys120 together coordinate (6S)-5-formyl-5,6,7,8-tetrahydrofolate. Residues 217–367 form the TrmE-type G domain; that stretch reads GFEVVILGAP…LLAEIGRRAA (151 aa). Residues 227–232, 246–252, and 271–274 contribute to the GTP site; these read NAGKSS, TDEPGTT, and DTAG. The Mg(2+) site is built by Ser231 and Thr252. Lys443 is a binding site for (6S)-5-formyl-5,6,7,8-tetrahydrofolate.

It belongs to the TRAFAC class TrmE-Era-EngA-EngB-Septin-like GTPase superfamily. TrmE GTPase family. Homodimer. Heterotetramer of two MnmE and two MnmG subunits. K(+) serves as cofactor.

It is found in the cytoplasm. In terms of biological role, exhibits a very high intrinsic GTPase hydrolysis rate. Involved in the addition of a carboxymethylaminomethyl (cmnm) group at the wobble position (U34) of certain tRNAs, forming tRNA-cmnm(5)s(2)U34. The sequence is that of tRNA modification GTPase MnmE from Mesorhizobium japonicum (strain LMG 29417 / CECT 9101 / MAFF 303099) (Mesorhizobium loti (strain MAFF 303099)).